The primary structure comprises 432 residues: Glutamate-1-semialdehyde 2,1-aminomutase (432 aa).

The residue at position 269 (K269) is an N6-(pyridoxal phosphate)lysine.

This sequence belongs to the class-III pyridoxal-phosphate-dependent aminotransferase family. HemL subfamily. As to quaternary structure, homodimer. It depends on pyridoxal 5'-phosphate as a cofactor.

It localises to the cytoplasm. The catalysed reaction is (S)-4-amino-5-oxopentanoate = 5-aminolevulinate. Its pathway is porphyrin-containing compound metabolism; protoporphyrin-IX biosynthesis; 5-aminolevulinate from L-glutamyl-tRNA(Glu): step 2/2. The chain is Glutamate-1-semialdehyde 2,1-aminomutase from Desulforamulus reducens (strain ATCC BAA-1160 / DSM 100696 / MI-1) (Desulfotomaculum reducens).